A 78-amino-acid polypeptide reads, in one-letter code: Acyl carrier protein (78 aa).

The 76-residue stretch at 2-77 (SDTEERVKKI…DAVKFIDKAS (76 aa)) folds into the Carrier domain. S37 is modified (O-(pantetheine 4'-phosphoryl)serine).

This sequence belongs to the acyl carrier protein (ACP) family. In terms of processing, 4'-phosphopantetheine is transferred from CoA to a specific serine of apo-ACP by AcpS. This modification is essential for activity because fatty acids are bound in thioester linkage to the sulfhydryl of the prosthetic group.

The protein localises to the cytoplasm. It functions in the pathway lipid metabolism; fatty acid biosynthesis. In terms of biological role, carrier of the growing fatty acid chain in fatty acid biosynthesis. This is Acyl carrier protein from Bartonella bacilliformis (strain ATCC 35685 / KC583 / Herrer 020/F12,63).